The primary structure comprises 188 residues: Protein GrpE (188 aa).

Residues 1 to 10 (MPDPTQNPNV) show a composition bias toward polar residues. The disordered stretch occupies residues 1–35 (MPDPTQNPNVTPELEQHAAPEAAAEAAPESSADVM). A compositionally biased stretch (low complexity) spans 19–32 (APEAAAEAAPESSA).

It belongs to the GrpE family. As to quaternary structure, homodimer.

The protein resides in the cytoplasm. In terms of biological role, participates actively in the response to hyperosmotic and heat shock by preventing the aggregation of stress-denatured proteins, in association with DnaK and GrpE. It is the nucleotide exchange factor for DnaK and may function as a thermosensor. Unfolded proteins bind initially to DnaJ; upon interaction with the DnaJ-bound protein, DnaK hydrolyzes its bound ATP, resulting in the formation of a stable complex. GrpE releases ADP from DnaK; ATP binding to DnaK triggers the release of the substrate protein, thus completing the reaction cycle. Several rounds of ATP-dependent interactions between DnaJ, DnaK and GrpE are required for fully efficient folding. This Azoarcus sp. (strain BH72) protein is Protein GrpE.